The sequence spans 70 residues: Putative membrane protein insertion efficiency factor (70 aa).

Belongs to the UPF0161 family.

The protein localises to the cell membrane. Functionally, could be involved in insertion of integral membrane proteins into the membrane. The chain is Putative membrane protein insertion efficiency factor from Finegoldia magna (strain ATCC 29328 / DSM 20472 / WAL 2508) (Peptostreptococcus magnus).